The following is a 383-amino-acid chain: ATP phosphoribosyltransferase regulatory subunit (383 aa).

The protein belongs to the class-II aminoacyl-tRNA synthetase family. HisZ subfamily. Heteromultimer composed of HisG and HisZ subunits.

It is found in the cytoplasm. It functions in the pathway amino-acid biosynthesis; L-histidine biosynthesis; L-histidine from 5-phospho-alpha-D-ribose 1-diphosphate: step 1/9. Required for the first step of histidine biosynthesis. May allow the feedback regulation of ATP phosphoribosyltransferase activity by histidine. The polypeptide is ATP phosphoribosyltransferase regulatory subunit (Desulfitobacterium hafniense (strain Y51)).